The sequence spans 511 residues: Histidine ammonia-lyase (511 aa).

The 5-imidazolinone (Ala-Gly) cross-link spans 142-144; the sequence is ASG. The residue at position 143 (S143) is a 2,3-didehydroalanine (Ser).

It belongs to the PAL/histidase family. Post-translationally, contains an active site 4-methylidene-imidazol-5-one (MIO), which is formed autocatalytically by cyclization and dehydration of residues Ala-Ser-Gly.

Its subcellular location is the cytoplasm. The enzyme catalyses L-histidine = trans-urocanate + NH4(+). It participates in amino-acid degradation; L-histidine degradation into L-glutamate; N-formimidoyl-L-glutamate from L-histidine: step 1/3. This is Histidine ammonia-lyase from Phenylobacterium zucineum (strain HLK1).